The following is a 156-amino-acid chain: Ribonuclease H (156 aa).

An RNase H type-1 domain is found at 3 to 144 (ELKLIHIFTD…CDVLARTAAE (142 aa)). Positions 12, 50, 72, and 136 each coordinate Mg(2+).

The protein belongs to the RNase H family. In terms of assembly, monomer. Requires Mg(2+) as cofactor.

It localises to the cytoplasm. The catalysed reaction is Endonucleolytic cleavage to 5'-phosphomonoester.. In terms of biological role, endonuclease that specifically degrades the RNA of RNA-DNA hybrids. This Shewanella baltica (strain OS223) protein is Ribonuclease H.